Reading from the N-terminus, the 366-residue chain is 3-isopropylmalate dehydrogenase (366 aa).

Position 78 to 91 (78 to 91) interacts with NAD(+); that stretch reads GPQWTHLKGSESPE. Substrate-binding residues include Arg99, Arg109, Arg138, and Asp227. Mg(2+) contacts are provided by Asp227, Asp251, and Asp255. An NAD(+)-binding site is contributed by 285–297; that stretch reads GSAPDIAEKNIAN.

This sequence belongs to the isocitrate and isopropylmalate dehydrogenases family. LeuB type 1 subfamily. In terms of assembly, homodimer. It depends on Mg(2+) as a cofactor. The cofactor is Mn(2+).

The protein resides in the cytoplasm. The catalysed reaction is (2R,3S)-3-isopropylmalate + NAD(+) = 4-methyl-2-oxopentanoate + CO2 + NADH. It functions in the pathway amino-acid biosynthesis; L-leucine biosynthesis; L-leucine from 3-methyl-2-oxobutanoate: step 3/4. Its function is as follows. Catalyzes the oxidation of 3-carboxy-2-hydroxy-4-methylpentanoate (3-isopropylmalate) to 3-carboxy-4-methyl-2-oxopentanoate. The product decarboxylates to 4-methyl-2 oxopentanoate. The chain is 3-isopropylmalate dehydrogenase from Blochmanniella pennsylvanica (strain BPEN).